Here is a 227-residue protein sequence, read N- to C-terminus: Ribonuclease 3 (227 aa).

An RNase III domain is found at 5–127 (YQKLSRRIGY…IIGAMYLDAG (123 aa)). A Mg(2+)-binding site is contributed by Glu40. Asp44 is an active-site residue. Mg(2+) is bound by residues Asp113 and Glu116. Glu116 is an active-site residue. The DRBM domain occupies 154-224 (DAKTRLQEFL…AAKALKKLEK (71 aa)).

The protein belongs to the ribonuclease III family. Homodimer. Requires Mg(2+) as cofactor.

The protein localises to the cytoplasm. It carries out the reaction Endonucleolytic cleavage to 5'-phosphomonoester.. Its function is as follows. Digests double-stranded RNA. Involved in the processing of primary rRNA transcript to yield the immediate precursors to the large and small rRNAs (23S and 16S). Processes some mRNAs, and tRNAs when they are encoded in the rRNA operon. Processes pre-crRNA and tracrRNA of type II CRISPR loci if present in the organism. The protein is Ribonuclease 3 of Marinomonas sp. (strain MWYL1).